The following is a 497-amino-acid chain: Guanosine-5'-triphosphate,3'-diphosphate pyrophosphatase (497 aa).

It belongs to the GppA/Ppx family. GppA subfamily.

It catalyses the reaction guanosine 3'-diphosphate 5'-triphosphate + H2O = guanosine 3',5'-bis(diphosphate) + phosphate + H(+). The protein operates within purine metabolism; ppGpp biosynthesis; ppGpp from GTP: step 2/2. In terms of biological role, catalyzes the conversion of pppGpp to ppGpp. Guanosine pentaphosphate (pppGpp) is a cytoplasmic signaling molecule which together with ppGpp controls the 'stringent response', an adaptive process that allows bacteria to respond to amino acid starvation, resulting in the coordinated regulation of numerous cellular activities. This Aliivibrio fischeri (strain ATCC 700601 / ES114) (Vibrio fischeri) protein is Guanosine-5'-triphosphate,3'-diphosphate pyrophosphatase.